We begin with the raw amino-acid sequence, 62 residues long: Calmodulin regulator protein PCP4 (62 aa).

The tract at residues Met1 to Glu40 is disordered. Basic and acidic residues predominate over residues Gly12 to Glu28. The segment at Glu28–Glu40 is acidic; binds calcium and is required for modulating the calcium-binding kinetics of calmodulin. The region spanning Thr39–Ser62 is the IQ domain.

The protein belongs to the PCP4 family. As to quaternary structure, binds to both calcium-free and calcium-bound calmodulin. The affinity for the calcium-bound form is 50-fold greater.

In terms of biological role, functions as a modulator of calcium-binding by calmodulin. Thereby, regulates calmodulin activity and the different processes it controls. For instance, may play a role in neuronal differentiation through activation of calmodulin-dependent kinase signaling pathways. This Bos taurus (Bovine) protein is Calmodulin regulator protein PCP4.